The following is a 405-amino-acid chain: 3-isopropylmalate dehydrogenase 2, chloroplastic (405 aa).

A chloroplast-targeting transit peptide spans 1–33 (MAAALQTNIRTVKVPATFRAVSKQSLAPFRVRC). Position 70 is a phosphoserine (Ser70). An NAD(+)-binding site is contributed by 114–129 (IGGYKWDNNEKHLRPE). Substrate contacts are provided by Arg136, Arg146, and Arg174. NAD(+) is bound at residue Asn234. Residue Asp264 coordinates substrate. Asp264 contacts Mg(2+). Asn265 provides a ligand contact to NAD(+). Residues Asp288 and Asp292 each contribute to the Mg(2+) site. An NAD(+)-binding site is contributed by 318 to 334 (EPIHGSAPDIAGQDKAN).

It belongs to the isocitrate and isopropylmalate dehydrogenases family. Homodimer. Mg(2+) serves as cofactor. It depends on Mn(2+) as a cofactor. Expressed at low levels in seedlings, cotyledons, hypocotyls, flowers, roots, pollen, leaves and stems.

The protein localises to the plastid. It is found in the chloroplast stroma. It carries out the reaction (2R,3S)-3-isopropylmalate + NAD(+) = 4-methyl-2-oxopentanoate + CO2 + NADH. Its pathway is amino-acid biosynthesis; L-leucine biosynthesis; L-leucine from 3-methyl-2-oxobutanoate: step 3/4. Its activity is regulated as follows. Regulated by a thiol-based redox modification. Its function is as follows. Involved in leucine biosynthesis; catalyzes the oxidative decarboxylation step in leucine biosynthesis (primary metabolism). Catalyzes the oxidation of 3-carboxy-2-hydroxy-4-methylpentanoate (3-isopropylmalate, 3-IPM) to 3-carboxy-4-methyl-2-oxopentanoate. The product decarboxylates to 4-methyl-2 oxopentanoate. Required during pollen development and involved in embryo sac development. The polypeptide is 3-isopropylmalate dehydrogenase 2, chloroplastic (Arabidopsis thaliana (Mouse-ear cress)).